A 78-amino-acid chain; its full sequence is Large ribosomal subunit protein bL28 (78 aa).

It belongs to the bacterial ribosomal protein bL28 family.

This is Large ribosomal subunit protein bL28 from Pasteurella multocida (strain Pm70).